An 804-amino-acid polypeptide reads, in one-letter code: Protein-lysine N-methyltransferase SMYD4 (804 aa).

Position 112–114 (112–114) interacts with S-adenosyl-L-methionine; sequence RSA. An SET domain is found at 233–574; sequence SSVGLCIDPL…KGQEILHCYG (342 aa). The Zn(2+) site is built by cysteine 296, cysteine 299, cysteine 309, cysteine 312, cysteine 318, cysteine 322, histidine 331, and cysteine 335. The MYND-type zinc finger occupies 296–335; it reads CHRCLKHTLATVPCDGCSYAKYCSQECLQQAWELYHRTEC. S-adenosyl-L-methionine contacts are provided by residues asparagine 427, 539–540, tyrosine 573, and phenylalanine 595; that span reads NH.

The protein belongs to the class V-like SAM-binding methyltransferase superfamily. In terms of assembly, interacts (via MYND-type zinc finger) with HDAC1.

It localises to the nucleus. The protein localises to the cytoplasm. It catalyses the reaction L-lysyl-[protein] + S-adenosyl-L-methionine = N(6)-methyl-L-lysyl-[protein] + S-adenosyl-L-homocysteine + H(+). In terms of biological role, protein-lysine N-methyltransferase. Monomethylates PRMT5, modulating its transcriptional activity. May also act as a histone methyltransferase. Plays a critical role in cardiac development. Acts as a key epigenetic regulator of gene expression during cardiac development via its dual activities as a methyltransferase and negative regulator of HDAC1. The polypeptide is Protein-lysine N-methyltransferase SMYD4 (SMYD4) (Pongo abelii (Sumatran orangutan)).